The chain runs to 70 residues: DNA gyrase inhibitor YacG (70 aa).

Residues C9, C12, C28, and C32 each coordinate Zn(2+). A disordered region spans residues 43–70 (ESRKIPGSSIDPESIVTTNNKQDNVDEQ).

The protein belongs to the DNA gyrase inhibitor YacG family. Interacts with GyrB. Zn(2+) serves as cofactor.

Inhibits all the catalytic activities of DNA gyrase by preventing its interaction with DNA. Acts by binding directly to the C-terminal domain of GyrB, which probably disrupts DNA binding by the gyrase. The chain is DNA gyrase inhibitor YacG from Legionella pneumophila (strain Corby).